Reading from the N-terminus, the 128-residue chain is Flagellar assembly factor FliW (128 aa).

The protein belongs to the FliW family. As to quaternary structure, interacts with translational regulator CsrA and flagellin(s).

The protein resides in the cytoplasm. Acts as an anti-CsrA protein, binds CsrA and prevents it from repressing translation of its target genes, one of which is flagellin. Binds to flagellin and participates in the assembly of the flagellum. The chain is Flagellar assembly factor FliW from Campylobacter fetus subsp. fetus (strain 82-40).